A 343-amino-acid chain; its full sequence is MNLLFKDLFGIFKIFEDVYERIRKILIPTTAYSWQTFIYLSVFSWIMSYFATGYIRDIIALCGWLFLIAGTAWYTTDDPLRVPGTFMPVGAVITGFLVSVFAFSNQEDVITSRTIVLWPTISALITAIPEFIEGSDTDSKTRIPKPDARQKIIVLVASCMMISCWLQFYFVLDKWLQEYPSLLAENFGRSTFVITREEQQKIPTNGVVILDRLQPLVEEQIAERPWSEVERWLLEANVRVGQLGREVLDNNLAQYEEKVLWRVEPRVVNNKSGYRLDLLSIWTGPTANPRGYFLRKSCQIDPVATTPINTTTNSRIPEEKKAVAEIQCDRLNKLFSGAAPPQQ.

This is an uncharacterized protein from Nostoc sp. (strain PCC 7120 / SAG 25.82 / UTEX 2576).